A 345-amino-acid polypeptide reads, in one-letter code: Inositol 2-dehydrogenase (345 aa).

This sequence belongs to the Gfo/Idh/MocA family. As to quaternary structure, homotetramer.

It catalyses the reaction myo-inositol + NAD(+) = scyllo-inosose + NADH + H(+). Functionally, involved in the oxidation of myo-inositol (MI) to 2-keto-myo-inositol (2KMI or 2-inosose). This chain is Inositol 2-dehydrogenase, found in Mycolicibacterium smegmatis (strain ATCC 700084 / mc(2)155) (Mycobacterium smegmatis).